The chain runs to 183 residues: Capsid protein (183 aa).

The segment at 136 to 183 is disordered; it reads NAPILSTLPETTVVRRRGRSPRRRTPSPRRRRSQSPRRRRSQSRESQC. The segment covering 149 to 176 has biased composition (basic residues); it reads VRRRGRSPRRRTPSPRRRRSQSPRRRRS. Residues serine 155, serine 162, and serine 170 each carry the phosphoserine; by host modification. Residues 155–161 form a 1; half-length repeat; the sequence is SPRRRTP. A 3 X 8 AA repeats of S-P-R-R-R-[PR]-S-Q region spans residues 155 to 177; sequence SPRRRTPSPRRRRSQSPRRRRSQ. Residues 158–175 carry the Bipartite nuclear localization signal motif; sequence RRTPSPRRRRSQSPRRRR. A run of 2 repeats spans residues 162 to 169 and 170 to 177. The interval 177–183 is RNA binding; sequence QSRESQC.

This sequence belongs to the orthohepadnavirus core antigen family. Homodimerizes, then multimerizes. Interacts with cytosol exposed regions of viral L glycoprotein present in the reticulum-to-Golgi compartment. Interacts with human FLNB. Phosphorylated form interacts with host importin alpha; this interaction depends on the exposure of the NLS, which itself depends upon genome maturation and/or phosphorylation of the capsid protein. Interacts with host NUP153. Post-translationally, phosphorylated by host SRPK1, SRPK2, and maybe protein kinase C or GAPDH. Phosphorylation is critical for pregenomic RNA packaging. Protein kinase C phosphorylation is stimulated by HBx protein and may play a role in transport of the viral genome to the nucleus at the late step during the viral replication cycle.

The protein resides in the virion. It localises to the host cytoplasm. In terms of biological role, self assembles to form an icosahedral capsid. Most capsids appear to be large particles with an icosahedral symmetry of T=4 and consist of 240 copies of capsid protein, though a fraction forms smaller T=3 particles consisting of 180 capsid proteins. Entering capsids are transported along microtubules to the nucleus. Phosphorylation of the capsid is thought to induce exposure of nuclear localization signal in the C-terminal portion of the capsid protein that allows binding to the nuclear pore complex via the importin (karyopherin-) alpha and beta. Capsids are imported in intact form through the nuclear pore into the nuclear basket, where it probably binds NUP153. Only capsids that contain the mature viral genome can release the viral DNA and capsid protein into the nucleoplasm. Immature capsids get stuck in the basket. Capsids encapsulate the pre-genomic RNA and the P protein. Pre-genomic RNA is reverse-transcribed into DNA while the capsid is still in the cytoplasm. The capsid can then either be directed to the nucleus, providing more genomes for transcription, or bud through the endoplasmic reticulum to provide new virions. This Hepatitis B virus genotype B1 subtype adw (isolate Japan/pJDW233/1988) (HBV-B) protein is Capsid protein.